The chain runs to 91 residues: Small ribosomal subunit protein bS20 (91 aa).

Disordered stretches follow at residues 1 to 26 (MALRHKSAQKRHRQSLKRRMLNRSRK) and 67 to 91 (HKNAAARKKSRLAKAINRVKAAQQS).

Belongs to the bacterial ribosomal protein bS20 family.

Functionally, binds directly to 16S ribosomal RNA. In Deinococcus deserti (strain DSM 17065 / CIP 109153 / LMG 22923 / VCD115), this protein is Small ribosomal subunit protein bS20.